A 515-amino-acid polypeptide reads, in one-letter code: Fatty acyl-CoA reductase 2 (515 aa).

The Cytoplasmic portion of the chain corresponds to 1 to 464 (MSMIAAFYSN…KAKQHLRRLR (464 aa)). Residues 465–484 (NIHYLFNTALFLIIWRLLIA) form a helical membrane-spanning segment. The Peroxisomal portion of the chain corresponds to 485-515 (RSQMARNVWFFIVSFCYKFISYFRASSTLKV).

Belongs to the fatty acyl-CoA reductase family. In terms of tissue distribution, specifically expressed in the meibomian glands of the eyelid and the sebaceous glands of the skin. Also expressed in the brain where large quantities of ether lipids are synthesized.

Its subcellular location is the peroxisome membrane. The enzyme catalyses a long-chain fatty acyl-CoA + 2 NADPH + 2 H(+) = a long-chain primary fatty alcohol + 2 NADP(+) + CoA. The catalysed reaction is hexadecanoyl-CoA + 2 NADPH + 2 H(+) = hexadecan-1-ol + 2 NADP(+) + CoA. It carries out the reaction octadecanoyl-CoA + 2 NADPH + 2 H(+) = octadecan-1-ol + 2 NADP(+) + CoA. It catalyses the reaction a very long-chain fatty acyl-CoA + 2 NADPH + 2 H(+) = a very long-chain primary fatty alcohol + 2 NADP(+) + CoA. The enzyme catalyses an ultra-long-chain fatty acyl-CoA + 2 NADPH + 2 H(+) = an ultra long-chain primary fatty alcohol + 2 NADP(+) + CoA. The catalysed reaction is eicosanoyl-CoA + 2 NADPH + 2 H(+) = eicosan-1-ol + 2 NADP(+) + CoA. It carries out the reaction docosanoyl-CoA + 2 NADPH + 2 H(+) = docosan-1-ol + 2 NADP(+) + CoA. It catalyses the reaction tetracosanoyl-CoA + 2 NADPH + 2 H(+) = tetracosan-1-ol + 2 NADP(+) + CoA. The enzyme catalyses hexacosanoyl-CoA + 2 NADPH + 2 H(+) = hexacosan-1-ol + 2 NADP(+) + CoA. The catalysed reaction is octacosanoyl-CoA + 2 NADPH + 2 H(+) = octacosan-1-ol + 2 NADP(+) + CoA. It carries out the reaction triacontanoyl-CoA + 2 NADPH + 2 H(+) = triacontan-1-ol + 2 NADP(+) + CoA. It catalyses the reaction 18-methylnonadecanoyl-CoA + 2 NADPH + 2 H(+) = 18-methylnonadecan-1-ol + 2 NADP(+) + CoA. The enzyme catalyses 20-methylheneicosanoyl-CoA + 2 NADPH + 2 H(+) = 20-methylheneicosan-1-ol + 2 NADP(+) + CoA. The catalysed reaction is 22-methyltricosanoyl-CoA + 2 NADPH + 2 H(+) = 22-methyltricosan-1-ol + 2 NADP(+) + CoA. It carries out the reaction 24-methylpentacosanoyl-CoA + 2 NADPH + 2 H(+) = 24-methylpentacosan-1-ol + 2 NADP(+) + CoA. In terms of biological role, catalyzes the reduction of saturated but not unsaturated C16 or C18 fatty acyl-CoA to fatty alcohols. A lower activity can be observed with shorter fatty acyl-CoA substrates. Can produce very long-chain and ultra long-chain FAls, regardless of whether they have a straight or branched chain. It may play a role in the production of ether lipids/plasmalogens and wax monoesters which synthesis requires fatty alcohols as substrates. The polypeptide is Fatty acyl-CoA reductase 2 (Mus musculus (Mouse)).